Reading from the N-terminus, the 945-residue chain is Xylanolytic transcriptional activator xlnR (945 aa).

The span at 1–23 shows a compositional bias: low complexity; the sequence is MSTPSIPQFTSSFSPFSSGSHST. 2 disordered regions span residues 1 to 32 and 53 to 118; these read MSTP…QTVG and AAGT…APVR. Over residues 73 to 84 the composition is skewed to basic and acidic residues; sequence HTKDQPPFDNEK. A DNA-binding region (zn(2)-C6 fungal-type) is located at residues 125–151; the sequence is CDQCNQLRTKCDGQHPCAHCIEFGLTC. 2 disordered regions span residues 172-210 and 559-601; these read AAAA…GTYD and PPNV…INVT. Residues 176-188 are compositionally biased toward polar residues; that stretch reads TQGSNGHSGQANA. The span at 565–581 shows a compositional bias: basic and acidic residues; that stretch reads ARQDGERDGDGEADKRH.

Belongs to the xlnR/xlr1 family.

It localises to the nucleus. Its function is as follows. Transcriptional activator of the xylanolytic system. Involved in the regulation of extracellular cellulolytic and xylanolytic genes and in the regulation of the intracellular activities of D-xylose catabolic genes in the pentose catabolic pathway (PCP) in response to the presence of D-xylose. Binds to the DNA sequence 5'-GGNTAAA-3'. This is Xylanolytic transcriptional activator xlnR (xlnR) from Aspergillus niger.